Here is a 336-residue protein sequence, read N- to C-terminus: Dihydroorotate dehydrogenase (quinone) (336 aa).

FMN is bound by residues 62–66 (AGLDK) and Thr-86. Substrate is bound at residue Lys-66. 111 to 115 (NRMGF) lines the substrate pocket. Residues Asn-139 and Asn-172 each coordinate FMN. Asn-172 is a binding site for substrate. Ser-175 (nucleophile) is an active-site residue. Asn-177 lines the substrate pocket. Residues Lys-217 and Thr-245 each contribute to the FMN site. Residue 246 to 247 (NT) participates in substrate binding. Residues Gly-268, Gly-297, and 318 to 319 (YS) each bind FMN.

It belongs to the dihydroorotate dehydrogenase family. Type 2 subfamily. As to quaternary structure, monomer. FMN is required as a cofactor.

The protein resides in the cell membrane. It catalyses the reaction (S)-dihydroorotate + a quinone = orotate + a quinol. It functions in the pathway pyrimidine metabolism; UMP biosynthesis via de novo pathway; orotate from (S)-dihydroorotate (quinone route): step 1/1. Its function is as follows. Catalyzes the conversion of dihydroorotate to orotate with quinone as electron acceptor. The protein is Dihydroorotate dehydrogenase (quinone) of Hamiltonella defensa subsp. Acyrthosiphon pisum (strain 5AT).